A 293-amino-acid polypeptide reads, in one-letter code: 5'-3' exoribonuclease Rnm (293 aa).

Residues histidine 13, histidine 15, aspartate 20, histidine 45, glutamate 72, histidine 83, histidine 198, aspartate 255, and histidine 257 each coordinate Mn(2+).

This sequence belongs to the PHP family. TrpH/YciV subfamily. Mn(2+) is required as a cofactor.

It catalyses the reaction a ribonucleoside 3',5'-bisphosphate + H2O = a ribonucleoside 5'-phosphate + phosphate. Exoribonuclease that catalyzes the last steps of 5S, 16S and 23S rRNA 5'-end maturation. Removes 3 nucleotides (nt) from the 5' end of 5S, 16S and 23S rRNA precursors to generate the mature 5' ends. Precursors with longer extensions are not processed (7 nt at the 5' end of pre-23S rRNA or 66 nt at the 5'-end of 16S rRNA are not processed). 5S and 23S rRNA maturation occurs more efficiently and accurately on ribosomal particles as compared to free RNA; the enzyme overdigests free RNA but generates the correct 5'-end in ribosomes from rnm deletion strains. Efficiently catalyzes the hydrolysis of the 3'-phosphate from 3',5'-bis-phosphonucleotides as well as the successive hydrolysis of 5'-phosphomononucleotides from the 5'-end of short pieces of RNA and DNA, with no specificity toward the identity of the nucleotide base. Is more efficient at hydrolyzing RNA oligonucleotides than DNA oligonucleotides. This enzyme can also hydrolyze annealed DNA duplexes, albeit at a catalytic efficiency approximately 10-fold lower than that of the corresponding single-stranded oligonucleotides. In Escherichia coli (strain K12), this protein is 5'-3' exoribonuclease Rnm.